A 318-amino-acid chain; its full sequence is NADH-ubiquinone oxidoreductase chain 1 (318 aa).

The next 8 membrane-spanning stretches (helical) occupy residues 3–23 (TTNI…LTLV), 69–89 (FMFT…WIPL), 100–120 (LGIL…LWSG), 135–155 (AVAQ…SLVL), 171–191 (HMWL…STLA), 213–233 (VEYA…NIIL), 253–273 (ELHT…FLWI), and 294–314 (LPLT…FASI).

Belongs to the complex I subunit 1 family.

The protein resides in the mitochondrion inner membrane. It catalyses the reaction a ubiquinone + NADH + 5 H(+)(in) = a ubiquinol + NAD(+) + 4 H(+)(out). Core subunit of the mitochondrial membrane respiratory chain NADH dehydrogenase (Complex I) that is believed to belong to the minimal assembly required for catalysis. Complex I functions in the transfer of electrons from NADH to the respiratory chain. The immediate electron acceptor for the enzyme is believed to be ubiquinone. The chain is NADH-ubiquinone oxidoreductase chain 1 (MT-ND1) from Choloepus didactylus (Southern two-toed sloth).